The primary structure comprises 647 residues: UvrABC system protein C (647 aa).

The GIY-YIG domain occupies Val16–Val95. One can recognise a UVR domain in the interval Asp208–Ala243.

It belongs to the UvrC family. In terms of assembly, interacts with UvrB in an incision complex.

The protein resides in the cytoplasm. Functionally, the UvrABC repair system catalyzes the recognition and processing of DNA lesions. UvrC both incises the 5' and 3' sides of the lesion. The N-terminal half is responsible for the 3' incision and the C-terminal half is responsible for the 5' incision. This chain is UvrABC system protein C, found in Mycolicibacterium paratuberculosis (strain ATCC BAA-968 / K-10) (Mycobacterium paratuberculosis).